The following is a 310-amino-acid chain: tRNA-cytidine(32) 2-sulfurtransferase (310 aa).

The PP-loop motif motif lies at 44 to 49 (SGGKDS). Residues Cys119, Cys122, and Cys210 each contribute to the [4Fe-4S] cluster site.

It belongs to the TtcA family. As to quaternary structure, homodimer. Mg(2+) serves as cofactor. The cofactor is [4Fe-4S] cluster.

It is found in the cytoplasm. It carries out the reaction cytidine(32) in tRNA + S-sulfanyl-L-cysteinyl-[cysteine desulfurase] + AH2 + ATP = 2-thiocytidine(32) in tRNA + L-cysteinyl-[cysteine desulfurase] + A + AMP + diphosphate + H(+). The protein operates within tRNA modification. Catalyzes the ATP-dependent 2-thiolation of cytidine in position 32 of tRNA, to form 2-thiocytidine (s(2)C32). The sulfur atoms are provided by the cysteine/cysteine desulfurase (IscS) system. The sequence is that of tRNA-cytidine(32) 2-sulfurtransferase from Saccharophagus degradans (strain 2-40 / ATCC 43961 / DSM 17024).